The following is a 239-amino-acid chain: Ribosomal RNA small subunit methyltransferase G (239 aa).

S-adenosyl-L-methionine is bound by residues glycine 80, phenylalanine 85, 103–105, 131–132, and arginine 150; these read EAS and AE.

It belongs to the methyltransferase superfamily. RNA methyltransferase RsmG family.

The protein localises to the cytoplasm. In terms of biological role, specifically methylates the N7 position of a guanine in 16S rRNA. In Caldanaerobacter subterraneus subsp. tengcongensis (strain DSM 15242 / JCM 11007 / NBRC 100824 / MB4) (Thermoanaerobacter tengcongensis), this protein is Ribosomal RNA small subunit methyltransferase G.